The primary structure comprises 185 residues: Capsid protein (185 aa).

A disordered region spans residues 136 to 185 (NAPILSTLPETTVVRRRDRGRSPRRRTPSPRRRRSQSPRRRRSQSRESQC). Positions 149-178 (VRRRDRGRSPRRRTPSPRRRRSQSPRRRRS) are enriched in basic residues. Phosphoserine; by host occurs at positions 157, 164, and 172. Residues 157-163 (SPRRRTP) form a 1; half-length repeat. The 3 X 8 AA repeats of S-P-R-R-R-[PR]-S-Q stretch occupies residues 157–179 (SPRRRTPSPRRRRSQSPRRRRSQ). The short motif at 160 to 177 (RRTPSPRRRRSQSPRRRR) is the Bipartite nuclear localization signal element. A run of 2 repeats spans residues 164–171 (SPRRRRSQ) and 172–179 (SPRRRRSQ). The interval 179–185 (QSRESQC) is RNA binding.

This sequence belongs to the orthohepadnavirus core antigen family. Homodimerizes, then multimerizes. Interacts with cytosol exposed regions of viral L glycoprotein present in the reticulum-to-Golgi compartment. Interacts with human FLNB. Phosphorylated form interacts with host importin alpha; this interaction depends on the exposure of the NLS, which itself depends upon genome maturation and/or phosphorylation of the capsid protein. Interacts with host NUP153. Post-translationally, phosphorylated by host SRPK1, SRPK2, and maybe protein kinase C or GAPDH. Phosphorylation is critical for pregenomic RNA packaging. Protein kinase C phosphorylation is stimulated by HBx protein and may play a role in transport of the viral genome to the nucleus at the late step during the viral replication cycle.

The protein resides in the virion. Its subcellular location is the host cytoplasm. Its function is as follows. Self assembles to form an icosahedral capsid. Most capsids appear to be large particles with an icosahedral symmetry of T=4 and consist of 240 copies of capsid protein, though a fraction forms smaller T=3 particles consisting of 180 capsid proteins. Entering capsids are transported along microtubules to the nucleus. Phosphorylation of the capsid is thought to induce exposure of nuclear localization signal in the C-terminal portion of the capsid protein that allows binding to the nuclear pore complex via the importin (karyopherin-) alpha and beta. Capsids are imported in intact form through the nuclear pore into the nuclear basket, where it probably binds NUP153. Only capsids that contain the mature viral genome can release the viral DNA and capsid protein into the nucleoplasm. Immature capsids get stuck in the basket. Capsids encapsulate the pre-genomic RNA and the P protein. Pre-genomic RNA is reverse-transcribed into DNA while the capsid is still in the cytoplasm. The capsid can then either be directed to the nucleus, providing more genomes for transcription, or bud through the endoplasmic reticulum to provide new virions. This chain is Capsid protein, found in Homo sapiens (Human).